Reading from the N-terminus, the 282-residue chain is Large ribosomal subunit protein uL4c (282 aa).

The N-terminal 49 residues, 1-49, are a transit peptide targeting the chloroplast; sequence MASSATAPNSLSFFSSSLFLSSSHQIPKTYISVSKLGSGRVSKPLSVSS. The tract at residues 106 to 138 is disordered; sequence EVRGGGIKPYSQKKTGHARRGSQRTPLRPGGGV.

Belongs to the universal ribosomal protein uL4 family. As to quaternary structure, part of the 50S ribosomal subunit.

The protein localises to the plastid. Its subcellular location is the chloroplast. In terms of biological role, this protein binds directly and specifically to 23S rRNA. May play a role in plastid transcriptional regulation. The sequence is that of Large ribosomal subunit protein uL4c (RPL4) from Arabidopsis thaliana (Mouse-ear cress).